The sequence spans 1468 residues: DNA polymerase III PolC-type (1468 aa).

The segment at 197–217 is disordered; the sequence is QKSLEDSAPPSEEVTPTQNYD. Positions 430 to 586 constitute an Exonuclease domain; sequence YVVFDVETTG…YDAEATGRLL (157 aa).

It belongs to the DNA polymerase type-C family. PolC subfamily.

The protein localises to the cytoplasm. It catalyses the reaction DNA(n) + a 2'-deoxyribonucleoside 5'-triphosphate = DNA(n+1) + diphosphate. Required for replicative DNA synthesis. This DNA polymerase also exhibits 3' to 5' exonuclease activity. This Streptococcus agalactiae serotype III (strain NEM316) protein is DNA polymerase III PolC-type.